The chain runs to 188 residues: Photosystem I assembly protein Ycf4 (188 aa).

Helical transmembrane passes span 26–46 (IWWGTVAAIGGIGFLLAGLSS) and 70–90 (LLFYGIAGSALSLYLWFTIIL).

The protein belongs to the Ycf4 family.

It localises to the cellular thylakoid membrane. Functionally, seems to be required for the assembly of the photosystem I complex. This Rippkaea orientalis (strain PCC 8801 / RF-1) (Cyanothece sp. (strain PCC 8801)) protein is Photosystem I assembly protein Ycf4.